An 868-amino-acid polypeptide reads, in one-letter code: DNA mismatch repair protein MutS (868 aa).

Residue 621 to 628 (GPNMGGKS) participates in ATP binding. The interval 803-852 (LESGDGGDTGSAQLPLFGPEPVFPPPAQPEPEPDPIREAVENLDPDGLTP) is disordered. Over residues 823-832 (PVFPPPAQPE) the composition is skewed to pro residues.

It belongs to the DNA mismatch repair MutS family.

In terms of biological role, this protein is involved in the repair of mismatches in DNA. It is possible that it carries out the mismatch recognition step. This protein has a weak ATPase activity. This chain is DNA mismatch repair protein MutS, found in Halorhodospira halophila (strain DSM 244 / SL1) (Ectothiorhodospira halophila (strain DSM 244 / SL1)).